Here is a 2031-residue protein sequence, read N- to C-terminus: Pericentriolar material 1 protein (2031 aa).

2 disordered regions span residues 1 to 82 and 111 to 165; these read MATG…HTFP and DQRS…STRS. The segment at 1–484 is self-association; sequence MATGGGPPDE…RSTEQRTLGS (484 aa). Positions 42–58 are enriched in basic and acidic residues; sequence RSAEKNKKKFVECDLRL. The segment covering 114–130 has biased composition (polar residues); sequence SIGSDSQGRATAANNKR. Residues 149–162 are compositionally biased toward basic and acidic residues; it reads NKEKSKSPPKREAS. Residues 302–394 are a coiled coil; the sequence is RQEAKEELKN…FHNQLHDSED (93 aa). Polar residues predominate over residues 469–494; sequence SSVSPRRSTEQRTLGSAVSSALTSDN. The disordered stretch occupies residues 469–495; that stretch reads SSVSPRRSTEQRTLGSAVSSALTSDNR. The stretch at 523 to 549 forms a coiled coil; the sequence is AEKLKKLKEVRKRLNELRELVHYYEQT. 2 disordered regions span residues 550–590 and 649–678; these read SDMM…NPQY and KEED…NSVA. Acidic residues predominate over residues 562 to 580; that stretch reads KDEDETEDSEYDSEQEDAE. 2 stretches are compositionally biased toward polar residues: residues 581-590 and 667-677; these read PTTNIRNPQY and SRASLSSQNSV. Residues 684–711 are a coiled coil; the sequence is VDFEQKFNRLVAAKQKLKQLQDLVAMYG. A disordered region spans residues 712–752; it reads DDSESEPVAPERSFSGDQFPPEATTLKQQPNNTRPNVSKAQ. The span at 736-750 shows a compositional bias: polar residues; that stretch reads TLKQQPNNTRPNVSK. The self-association and localization to centrosomes stretch occupies residues 745–1271; it reads RPNVSKAQKD…PACFGAGLSA (527 aa). A coiled-coil region spans residues 757–805; that stretch reads LKEQAREKFYESKLQQQQRELSQLQEERKKLIEIQEKIQTLRKACPDLQ. 2 stretches are compositionally biased toward polar residues: residues 806–823 and 888–898; these read LSTS…NRQM and QGNTETTSAAS. 2 disordered regions span residues 806–835 and 882–1014; these read LSTS…VNTN and AEHQ…VSMR. Residues 858–892 are a coiled coil; the sequence is SEIRKHQILREDLRQRRKQLETLMAEHQRRQGNTE. Residues 930 to 945 show a composition bias toward acidic residues; that stretch reads LEEEEEEEEVDDEECL. 2 stretches are compositionally biased toward polar residues: residues 960–981 and 1004–1013; these read NTSC…FNGR and KTRQQQNVSM. Positions 1025 to 1049 form a coiled coil; the sequence is LSHVEEKEHWQEQIDQIKKQLDYST. 4 disordered regions span residues 1123 to 1146, 1219 to 1247, 1318 to 1345, and 1514 to 1533; these read QHLQ…TSPN, KPFE…QGRR, SAQA…QKSK, and PVCQ…LSTS. 2 stretches are compositionally biased toward basic and acidic residues: residues 1127-1136 and 1221-1247; these read GESHQREDRG and FESH…QGRR. Positions 1331-1345 are enriched in basic residues; it reads KAKNKKRKVFHQKSK. Positions 1524–1533 are enriched in polar residues; that stretch reads GDNISSLSTS. A coiled-coil region spans residues 1550–1599; that stretch reads HFDQALARMREYERMKSETENGLVADCCNNLNAAASSLEGTNDEARGRAQ. Disordered regions lie at residues 1746-1802, 1817-1870, 1922-1965, and 2007-2031; these read ADKE…DLDE, ALTN…EANI, NNVK…DEDD, and ENGA…IHPA. Residues 1771 to 1784 are compositionally biased toward basic and acidic residues; that stretch reads KDETETAEENRNFD. A compositionally biased stretch (acidic residues) spans 1824–1835; it reads GEDENEDEENYE. Polar residues-rich tracts occupy residues 1843-1852 and 1922-1942; these read VQTSLETSSE and NNVK…SDTE.

It belongs to the PCM1 family. Self-associates. Interacts with cetn3.

The protein resides in the cytoplasm. It localises to the cytoskeleton. It is found in the microtubule organizing center. The protein localises to the centrosome. Its subcellular location is the cytoplasmic granule. The protein resides in the centriolar satellite. It localises to the cilium basal body. Functionally, required to anchor microtubules to the centrosome. Required for centrosome assembly and function. Essential for the correct localization of several centrosomal proteins including cetn3 and pcnt. Probably involved in the biogenesis of cilia. In Xenopus laevis (African clawed frog), this protein is Pericentriolar material 1 protein (pcm1).